Consider the following 106-residue polypeptide: Large ribosomal subunit protein uL24 (106 aa).

The protein belongs to the universal ribosomal protein uL24 family. Part of the 50S ribosomal subunit.

Functionally, one of two assembly initiator proteins, it binds directly to the 5'-end of the 23S rRNA, where it nucleates assembly of the 50S subunit. Its function is as follows. One of the proteins that surrounds the polypeptide exit tunnel on the outside of the subunit. The chain is Large ribosomal subunit protein uL24 from Erythrobacter litoralis (strain HTCC2594).